The chain runs to 856 residues: Serine/threonine-protein phosphatase 6 regulatory subunit 1 (856 aa).

An interaction with PPP6C region spans residues 10–403; the sequence is SSHLDTLLEK…VFNNFLHAQV (394 aa). A Phosphoserine modification is found at S232. T524 bears the Phosphothreonine mark. S529, S530, and S531 each carry phosphoserine. Positions 621–630 are enriched in acidic residues; that stretch reads DDEEEEEEEG. Disordered stretches follow at residues 621–770 and 792–856; these read DDEE…KVAE and RSAP…SGSQ. Phosphoserine occurs at positions 633 and 636. Positions 644-656 are enriched in polar residues; it reads QGSQPVRASQASQ. Acidic residues predominate over residues 667 to 683; it reads DSEEEDEEEDEEEDEGA. Phosphoserine occurs at positions 698 and 739. Residues 794 to 809 show a composition bias toward polar residues; it reads APSSLDSATRDPSTSV. S826 is modified (phosphoserine). Low complexity predominate over residues 842–856; it reads PNGSTPGGPISSGSQ.

It belongs to the SAPS family. Protein phosphatase 6 (PP6) holoenzyme is proposed to be a heterotrimeric complex formed of the catalytic subunit, a SAPS domain-containing subunit (PP6R) and an ankyrin repeat-domain containing regulatory subunit (ARS). Interacts with PPP6C and NFKBIE. Interacts with ANKRD28, ANKRD44 and ANKRD52. In terms of tissue distribution, ubiquitous with highest expression in lung, spleen and bladder.

The protein resides in the cytoplasm. Functionally, regulatory subunit of protein phosphatase 6 (PP6). May function as a scaffolding PP6 subunit. Involved in the PP6-mediated dephosphorylation of NFKBIE opposing its degradation in response to TNF-alpha. The sequence is that of Serine/threonine-protein phosphatase 6 regulatory subunit 1 (Ppp6r1) from Mus musculus (Mouse).